Here is an 86-residue protein sequence, read N- to C-terminus: Photosystem I reaction center subunit PsaK (86 aa).

A helical membrane pass occupies residues 15–34; the sequence is PWSTQVAMVMITCNLLAIVA.

It belongs to the PsaG/PsaK family.

The protein localises to the plastid. The protein resides in the chloroplast thylakoid membrane. This is Photosystem I reaction center subunit PsaK from Pyropia yezoensis (Susabi-nori).